We begin with the raw amino-acid sequence, 1031 residues long: MKSAKSQVNQDQQGENQRALSPLQSTLSSAASPSQAYETYIDNGLICLKHKIRNIEKKKLKLEDYKDRLKNGEQLNPDQLEAVEKYEEVLHNLEFAKELQKTFSALSQDLLKAQKKAQRREHMLKLETEKKKLRTMLQIQYVLQNLTQEHVQKDFKGGLNGAMYLPSKELDYLIKFSKLTCPERNESLSVEDQMEQSSLYFWDLLEGSEKTVVGTTYKHVKDLLSKLLHSGYFESVPVLRNSKEKAEEVLMQSEMKKQLLKSESIKESESLTELVQPEIQPQEFLNRRYMTEVKFSRKQENVEQSWEADYARKPSLLKCWNTLPEPDGQEKKKESLESWKSSLKTQEVSKPVVSLVQGKLRPTLQEEQKQQVPITPVSQWKPESPKSKVGSPQEEQNVQETPKPWVVQSQKEQDPKKLPPGSWAVSVQSEQSGSRSWTTPVCREQASVQPGTPVSWENNAENQKHSLVPQSQISLKSWGAASAGLLPNGQVLTRKLNVEPKDVPKPLPQPIDSSSALPKDPVLRKEKLQDLMSQIQGTYNFMQESVLDFDKPSSAIPSSQPPSACPVSTVSAEQNLSNQSDFLQEPSQASSPVTCSSNACLVTTDQASSGSETEFTTSETPEMVVSPCKPKPASALASPNPPLSKSFQLPPASGSSEAISTAPFQAMQTVFNVNAPLPPRKEQEMKEPPYSSGYNQNFTSSSTQTVSQCQLPAVHIDQTTQPPETGAGYHPDGTVQVSNGSLAFYPAPTSMFPRPAQPFISSRGTLRGCSHGGRLLMSSYQSPGGYKGFDSYRGLPSVSSGNYSQLQLQAREYSGTAYSQRDNFQQCYKRSGTSSGLQANSRAGWSDSSQVSSPERDSETFNSGDSGLGDSRSMTPVDVPVTSPAAAILPVHIYPLPQQMRVAFSAARTSNLAPGTLDQPIVFDLLLNNLGETFDLQLGRFNCPVNGTYVFIFHMLKLAVNVPLYVNLMKNEEVLVSAYANDGAPDHETASNHAVLQLLQGDQIWLRLHRGAIYGSSWKYSTFSGYLLYQD.

Disordered regions lie at residues 1–27 (MKSA…QSTL), 364–458 (LQEE…SWEN), 500–520 (PKDV…LPKD), 605–658 (DQAS…SSEA), and 830–876 (RSGT…SMTP). 2 stretches are compositionally biased toward polar residues: residues 425–439 (VSVQ…SWTT) and 446–458 (ASVQ…SWEN). Low complexity predominate over residues 608–646 (SSGSETEFTTSETPEMVVSPCKPKPASALASPNPPLSKS). Over residues 830-853 (RSGTSSGLQANSRAGWSDSSQVSS) the composition is skewed to polar residues. Residues Ser-852 and Ser-853 each carry the phosphoserine modification. The region spanning 897 to 1031 (PQQMRVAFSA…TFSGYLLYQD (135 aa)) is the C1q domain. Residues Asp-982 and Glu-988 each contribute to the Ca(2+) site.

It belongs to the caprin family. As to quaternary structure, homotrimer; via C1q domain. Found in a complex with LRP6, CCNY and CDK14 during G2/M stage; CAPRIN2 functions as a scaffold for the complex by binding to CCNY via its N terminus and to CDK14 via its C terminus. Interacts with LRP5. Interacts with LRP6. As to expression, specifically expressed in brain (at protein level).

The protein resides in the cytoplasm. The protein localises to the cell membrane. Promotes phosphorylation of the Wnt coreceptor LRP6, leading to increased activity of the canonical Wnt signaling pathway. Facilitates constitutive LRP6 phosphorylation by CDK14/CCNY during G2/M stage of the cell cycle, which may potentiate cells for Wnt signaling. May regulate the transport and translation of mRNAs, modulating for instance the expression of proteins involved in synaptic plasticity in neurons. Involved in regulation of growth as erythroblasts shift from a highly proliferative state towards their terminal phase of differentiation. May be involved in apoptosis. This Mus musculus (Mouse) protein is Caprin-2.